A 146-amino-acid polypeptide reads, in one-letter code: UPF0178 protein BT9727_2823 (146 aa).

The protein belongs to the UPF0178 family.

This is UPF0178 protein BT9727_2823 from Bacillus thuringiensis subsp. konkukian (strain 97-27).